The chain runs to 576 residues: Keratin, type II cytoskeletal 5 (576 aa).

Residues 1 to 163 are head; the sequence is MSRQSSVSFR…DPTIQRVRTE (163 aa). Phosphoserine occurs at positions 5, 8, 16, and 21. Phosphothreonine; by CDK1 is present on Thr-24. Phosphoserine occurs at positions 26, 36, 46, 60, 67, 71, 74, and 78. Residue Thr-147 is modified to Phosphothreonine; by CDK1. Thr-162 bears the Phosphothreonine; by AURKB mark. The segment at 164–199 is coil 1A; sequence EREQIKTLNNKFASFIDKVRFLEQQNKVLDTKWTLL. The IF rod domain maps to 164-477; the sequence is EREQIKTLNN…KLLEGEECRL (314 aa). The tract at residues 200-218 is linker 1; it reads QEQGTKTIKQNLDPLFEQY. Residues 219 to 311 form a coil 1B region; the sequence is INNLRRQLDG…FFDAELSQMQ (93 aa). Residues 312–334 form a linker 12 region; sequence THVSDTSVVLSMDNNRSLDLDSI. The coil 2 stretch occupies residues 335 to 473; sequence IAEVKAQYED…ATYRKLLEGE (139 aa). A tail region spans residues 474 to 576; that stretch reads ECRLSGEGVG…TSSSRRSFKS (103 aa). Position 527 is an omega-N-methylarginine (Arg-527). The segment covering 540–557 has biased composition (gly residues); sequence GFSASSGQGGGFSSGGGS. Residues 540-576 form a disordered region; that stretch reads GFSASSGQGGGFSSGGGSSSSVKFVSTTSSSRRSFKS. A compositionally biased stretch (low complexity) spans 558–576; sequence SSSVKFVSTTSSSRRSFKS.

This sequence belongs to the intermediate filament family. Heterodimer of a type I and a type II keratin. Heterodimer with type I keratin KRT25 leading to the formation of keratin intermediate filament (KIF) network. Forms a heterodimer (via 2B domains) with KRT14 (via 2B domains). Interacts with TCHP. Interacts with EPPK1. Interacts with AMELX. Interacts with PKP1 (via N-terminus) and PKP2. Phosphorylated by CDK1, AURKB and Rho-kinase, phosphorylation is regulated by the cell cycle. Thr-24 phosphorylation, mediated by CDK1, peaks during prometaphase or metaphase cells with phosphorylated filamentous structures evident throughout the cytoplasm during early mitosis. CDK1 phosphorylates Thr-24 in mitotic cells at the site of injury. In terms of processing, O-glycosylated. Expressed in the epidermis (at protein level) and testis (within pachytene spermatocytes).

It localises to the cytoplasm. Required for the formation of keratin intermediate filaments in the basal epidermis and maintenance of the skin barrier in response to mechanical stress. Regulates the recruitment of Langerhans cells to the epidermis, potentially by modulation of the abundance of macrophage chemotactic cytokines, macrophage inflammatory cytokines and CTNND1 localization in keratinocytes. This Rattus norvegicus (Rat) protein is Keratin, type II cytoskeletal 5.